The chain runs to 222 residues: Probable glutathione-independent glyoxalase hsp3104 (222 aa).

Active-site residues include C124, H125, and E155.

It belongs to the peptidase C56 family. HSP31-like subfamily.

It localises to the cytoplasm. It carries out the reaction methylglyoxal + H2O = (R)-lactate + H(+). In terms of biological role, catalyzes the conversion of methylglyoxal (MG) to D-lactate in a single glutathione (GSH)-independent step. May play a role in detoxifying endogenously produced glyoxals. Involved in protection against reactive oxygen species (ROS). The protein is Probable glutathione-independent glyoxalase hsp3104 of Schizosaccharomyces pombe (strain 972 / ATCC 24843) (Fission yeast).